The chain runs to 478 residues: MAFPYQCLVARSESSADGAAWTLFGASGSKIVVQSSNGVASVWSRQAVQVLDPKDDDTQEPPGKRIKLSTPKEQKFNFSSLVLSNNGHYLVGVTGEDKCVRVFQIDAQSGLQQLSERCMSRRPSAITLTSDDSTILCADKFGDVYALPLLPSPEDEQVEAPAPALPLEEKDFTPSATVFTVHSGRNRRTLEEQLKQKAKGPAKPKEAITFRHDLLLGHVSMLTDLAFAKIGNKSYIITADRDEHIRISRGVPQAHIIEGFCFGHEEFVSRLCVTRSGLLVSGGGDAHLLVWDWRNFLLNEKLPLRDTVIKHLRSRPDLSSSFKDDASFKTAVSGIWEVPGIKETSEVLVACEGLPGLFNFNVGTGAVNGDSLSLMGNPLDVAFVQTSPNSWTTIVSIDNVHKAGSTSELRENADGARLQYFSKQVDGAWREDAEMGALVSSFALGGTDGPDLTTADDKAVRDILYHVENLRKRPGAED.

WD repeat units follow at residues 14–53 (SSADGAAWTLFGASGSKIVVQSSNGVASVWSRQAVQVLDP), 73–113 (EQKF…GLQQ), 217–258 (GHVS…HIIE), and 263–301 (GHEEFVSRLCVTRSGLLVSGGGDAHLLVWDWRNFLLNEK).

The protein belongs to the WD repeat TRM82 family. As to quaternary structure, forms a heterodimer with the catalytic subunit TRM8.

It is found in the nucleus. It participates in tRNA modification; N(7)-methylguanine-tRNA biosynthesis. Functionally, required for the formation of N(7)-methylguanine at position 46 (m7G46) in tRNA. In the complex, it is required to stabilize and induce conformational changes of the catalytic subunit. This is tRNA (guanine-N(7)-)-methyltransferase non-catalytic subunit TRM82 from Phaeosphaeria nodorum (strain SN15 / ATCC MYA-4574 / FGSC 10173) (Glume blotch fungus).